The chain runs to 692 residues: Protein arginine N-methyltransferase 7 (692 aa).

SAM-dependent MTase PRMT-type domains follow at residues 14 to 359 and 368 to 692; these read ENSW…YSLW and AKTV…QEKR.

This sequence belongs to the class I-like SAM-binding methyltransferase superfamily. Protein arginine N-methyltransferase family. PRMT7 subfamily.

In terms of biological role, essential arginine methyltransferase that can both catalyze the formation of omega-N monomethylarginine (MMA) and symmetrical dimethylarginine (sDMA). Specifically mediates the symmetrical dimethylation of arginine residues in the small nuclear ribonucleoproteins SmD1 and SmD3. The polypeptide is Protein arginine N-methyltransferase 7 (Art7) (Drosophila pseudoobscura pseudoobscura (Fruit fly)).